Reading from the N-terminus, the 390-residue chain is Exodeoxyribonuclease 7 large subunit (390 aa).

Belongs to the XseA family. In terms of assembly, heterooligomer composed of large and small subunits.

It localises to the cytoplasm. The enzyme catalyses Exonucleolytic cleavage in either 5'- to 3'- or 3'- to 5'-direction to yield nucleoside 5'-phosphates.. Its function is as follows. Bidirectionally degrades single-stranded DNA into large acid-insoluble oligonucleotides, which are then degraded further into small acid-soluble oligonucleotides. The sequence is that of Exodeoxyribonuclease 7 large subunit from Synechococcus sp. (strain CC9311).